Consider the following 244-residue polypeptide: 7-cyano-7-deazaguanine synthase (244 aa).

ATP is bound at residue 14–24 (FSGGQDSATCV). Residues Cys202, Cys217, Cys220, and Cys223 each contribute to the Zn(2+) site.

This sequence belongs to the QueC family. Zn(2+) is required as a cofactor.

The enzyme catalyses 7-carboxy-7-deazaguanine + NH4(+) + ATP = 7-cyano-7-deazaguanine + ADP + phosphate + H2O + H(+). Its pathway is purine metabolism; 7-cyano-7-deazaguanine biosynthesis. In terms of biological role, catalyzes the ATP-dependent conversion of 7-carboxy-7-deazaguanine (CDG) to 7-cyano-7-deazaguanine (preQ(0)). In Burkholderia vietnamiensis (strain G4 / LMG 22486) (Burkholderia cepacia (strain R1808)), this protein is 7-cyano-7-deazaguanine synthase.